The sequence spans 419 residues: UDP-N-acetylglucosamine 1-carboxyvinyltransferase (419 aa).

A phosphoenolpyruvate-binding site is contributed by 22–23 (KN). R91 lines the UDP-N-acetyl-alpha-D-glucosamine pocket. C115 serves as the catalytic Proton donor. C115 carries the post-translational modification 2-(S-cysteinyl)pyruvic acid O-phosphothioketal. Residues 120–124 (RPVDL), 160–163 (KVSV), D305, and I327 contribute to the UDP-N-acetyl-alpha-D-glucosamine site.

The protein belongs to the EPSP synthase family. MurA subfamily.

It localises to the cytoplasm. It catalyses the reaction phosphoenolpyruvate + UDP-N-acetyl-alpha-D-glucosamine = UDP-N-acetyl-3-O-(1-carboxyvinyl)-alpha-D-glucosamine + phosphate. The protein operates within cell wall biogenesis; peptidoglycan biosynthesis. Cell wall formation. Adds enolpyruvyl to UDP-N-acetylglucosamine. This is UDP-N-acetylglucosamine 1-carboxyvinyltransferase from Serratia proteamaculans (strain 568).